The chain runs to 236 residues: Small ribosomal subunit protein uS3 (236 aa).

One can recognise a KH type-2 domain in the interval 39 to 107; the sequence is VREFLKKSLS…PAQISITEIK (69 aa).

This sequence belongs to the universal ribosomal protein uS3 family. In terms of assembly, part of the 30S ribosomal subunit. Forms a tight complex with proteins S10 and S14.

In terms of biological role, binds the lower part of the 30S subunit head. Binds mRNA in the 70S ribosome, positioning it for translation. The protein is Small ribosomal subunit protein uS3 of Wigglesworthia glossinidia brevipalpis.